A 441-amino-acid polypeptide reads, in one-letter code: Transcriptional regulatory protein ZraR (441 aa).

Residues 7–121 (DILVVDDDVS…RLQETLEKAL (115 aa)) enclose the Response regulatory domain. 4-aspartylphosphate is present on aspartate 56. Residues 141 to 370 (MIGSSPAMQH…LENAIERAVV (230 aa)) form the Sigma-54 factor interaction domain. Glycine 172, threonine 173, arginine 329, and arginine 359 together coordinate ATP. Positions 421–440 (KTEAARQLGITRKTLLAKLS) form a DNA-binding region, H-T-H motif.

As to quaternary structure, forms homohexamers in the crystal structure. However, the dimerization interface between DNA-binding domains observed in the crystal structure suggests that dodecamers, rather than hexamers, might be the functionally important oligomer. Post-translationally, phosphorylated by ZraS.

It localises to the cytoplasm. Its activity is regulated as follows. Activity of the ZraS/ZraR two-component system is repressed by the zinc-bound form of ZraP, which probably interacts with the periplasmic region of ZraS. Its function is as follows. Part of the Zra signaling pathway, an envelope stress response (ESR) system composed of the periplasmic accessory protein ZraP, the histidine kinase ZraS and the transcriptional regulator ZraR. The ZraPSR system contributes to antibiotic resistance and is important for membrane integrity in the presence of membrane-targeting biocides. ZraR is a member of the two-component regulatory system ZraS/ZraR. When activated by ZraS, acts in conjunction with sigma-54 to regulate the expression of zraP in the presence of high Zn(2+) or Pb(2+) concentrations. Also positively autoregulates the expression of the zraSR operon. The protein is Transcriptional regulatory protein ZraR of Salmonella typhimurium (strain LT2 / SGSC1412 / ATCC 700720).